Reading from the N-terminus, the 118-residue chain is UPF0342 protein BCE_0953 (118 aa).

It belongs to the UPF0342 family.

The protein is UPF0342 protein BCE_0953 of Bacillus cereus (strain ATCC 10987 / NRS 248).